Consider the following 213-residue polypeptide: ATP synthase subunit b 2 (213 aa).

Positions methionine 1–glycine 45 are disordered. A helical transmembrane segment spans residues threonine 57–methionine 76.

It belongs to the ATPase B chain family. F-type ATPases have 2 components, F(1) - the catalytic core - and F(0) - the membrane proton channel. F(1) has five subunits: alpha(3), beta(3), gamma(1), delta(1), epsilon(1). F(0) has three main subunits: a(1), b(2) and c(10-14). The alpha and beta chains form an alternating ring which encloses part of the gamma chain. F(1) is attached to F(0) by a central stalk formed by the gamma and epsilon chains, while a peripheral stalk is formed by the delta and b chains.

The protein localises to the cell inner membrane. F(1)F(0) ATP synthase produces ATP from ADP in the presence of a proton or sodium gradient. F-type ATPases consist of two structural domains, F(1) containing the extramembraneous catalytic core and F(0) containing the membrane proton channel, linked together by a central stalk and a peripheral stalk. During catalysis, ATP synthesis in the catalytic domain of F(1) is coupled via a rotary mechanism of the central stalk subunits to proton translocation. Its function is as follows. Component of the F(0) channel, it forms part of the peripheral stalk, linking F(1) to F(0). The b'-subunit is a diverged and duplicated form of b found in plants and photosynthetic bacteria. This is ATP synthase subunit b 2 (atpF2) from Agrobacterium fabrum (strain C58 / ATCC 33970) (Agrobacterium tumefaciens (strain C58)).